A 547-amino-acid polypeptide reads, in one-letter code: CTP synthase (547 aa).

The tract at residues M1–I265 is amidoligase domain. S13 is a CTP binding site. Residue S13 participates in UTP binding. ATP contacts are provided by residues S14 to L19 and D71. D71 and E139 together coordinate Mg(2+). Residues D146–E148, K186–Q191, and K222 each bind CTP. UTP is bound by residues K186–Q191 and K222. The Glutamine amidotransferase type-1 domain maps to K291–L546. Residue G353 participates in L-glutamine binding. The Nucleophile; for glutamine hydrolysis role is filled by C380. L-glutamine is bound by residues L381–Q384, E404, and R474. Residues H519 and E521 contribute to the active site.

The protein belongs to the CTP synthase family. In terms of assembly, homotetramer.

It catalyses the reaction UTP + L-glutamine + ATP + H2O = CTP + L-glutamate + ADP + phosphate + 2 H(+). The enzyme catalyses L-glutamine + H2O = L-glutamate + NH4(+). It carries out the reaction UTP + NH4(+) + ATP = CTP + ADP + phosphate + 2 H(+). Its pathway is pyrimidine metabolism; CTP biosynthesis via de novo pathway; CTP from UDP: step 2/2. Allosterically activated by GTP, when glutamine is the substrate; GTP has no effect on the reaction when ammonia is the substrate. The allosteric effector GTP functions by stabilizing the protein conformation that binds the tetrahedral intermediate(s) formed during glutamine hydrolysis. Inhibited by the product CTP, via allosteric rather than competitive inhibition. Catalyzes the ATP-dependent amination of UTP to CTP with either L-glutamine or ammonia as the source of nitrogen. Regulates intracellular CTP levels through interactions with the four ribonucleotide triphosphates. The protein is CTP synthase of Jannaschia sp. (strain CCS1).